The primary structure comprises 257 residues: 5'-nucleotidase SurE (257 aa).

The a divalent metal cation site is built by D8, D9, S40, and N93.

It belongs to the SurE nucleotidase family. A divalent metal cation is required as a cofactor.

It localises to the cytoplasm. The enzyme catalyses a ribonucleoside 5'-phosphate + H2O = a ribonucleoside + phosphate. Its function is as follows. Nucleotidase that shows phosphatase activity on nucleoside 5'-monophosphates. The polypeptide is 5'-nucleotidase SurE (Phenylobacterium zucineum (strain HLK1)).